The primary structure comprises 511 residues: Bifunctional purine biosynthesis protein PurH (511 aa).

Residues 1–146 (MARLALLSVS…KNFAHTTVLT (146 aa)) form the MGS-like domain.

It belongs to the PurH family.

The catalysed reaction is (6R)-10-formyltetrahydrofolate + 5-amino-1-(5-phospho-beta-D-ribosyl)imidazole-4-carboxamide = 5-formamido-1-(5-phospho-D-ribosyl)imidazole-4-carboxamide + (6S)-5,6,7,8-tetrahydrofolate. It catalyses the reaction IMP + H2O = 5-formamido-1-(5-phospho-D-ribosyl)imidazole-4-carboxamide. It functions in the pathway purine metabolism; IMP biosynthesis via de novo pathway; 5-formamido-1-(5-phospho-D-ribosyl)imidazole-4-carboxamide from 5-amino-1-(5-phospho-D-ribosyl)imidazole-4-carboxamide (10-formyl THF route): step 1/1. It participates in purine metabolism; IMP biosynthesis via de novo pathway; IMP from 5-formamido-1-(5-phospho-D-ribosyl)imidazole-4-carboxamide: step 1/1. In Synechocystis sp. (strain ATCC 27184 / PCC 6803 / Kazusa), this protein is Bifunctional purine biosynthesis protein PurH.